The chain runs to 605 residues: Pyruvate decarboxylase 1 (605 aa).

Substrate contacts are provided by aspartate 67 and histidine 154. Positions 432-514 are thiamine pyrophosphate binding; the sequence is DSWFNCQKLR…FLINNGGYTI (83 aa). 3 residues coordinate Mg(2+): aspartate 482, asparagine 509, and glycine 511. Glutamate 515 is a binding site for substrate.

The protein belongs to the TPP enzyme family. Homotetramer. A metal cation serves as cofactor. It depends on thiamine diphosphate as a cofactor.

It catalyses the reaction a 2-oxocarboxylate + H(+) = an aldehyde + CO2. The protein is Pyruvate decarboxylase 1 (PDC1) of Oryza sativa subsp. japonica (Rice).